A 152-amino-acid polypeptide reads, in one-letter code: Transcriptional repressor NrdR (152 aa).

The segment at 3 to 34 (CPYCNASETKVIDSRLAAEGAQVRRRRSCNSC) is a zinc-finger region. The ATP-cone domain maps to 49 to 139 (PRIIKSSGKI…VYRDFQDIDA (91 aa)).

Belongs to the NrdR family. It depends on Zn(2+) as a cofactor.

Negatively regulates transcription of bacterial ribonucleotide reductase nrd genes and operons by binding to NrdR-boxes. The polypeptide is Transcriptional repressor NrdR (Psychrobacter cryohalolentis (strain ATCC BAA-1226 / DSM 17306 / VKM B-2378 / K5)).